We begin with the raw amino-acid sequence, 325 residues long: MRVQSYLSLFSLVGAALCAPREHFKRTARTSAPAGCLTVGGSGTYSTIGAAFAALGSSSSEACIYISAGTYKEQLTFQYAGPLTLYGETTDTSSYKKNTVTITHTISSPEAGSLVASATVNAAMDNFTMYNINVVNGYGKGAQAVALAASGERQGYYGCQFLGYQDTLYARVGVQYYSNCYIEGAVDYIFGDASAWFGECDIVSNGAGYITAMSRETASDPAWYCFDHCNIYGKSGLDLTGDVYLGRPWRVLARVIYQNSELSDIINAAGWTTMAEGATPLYYEIGNTGDGADTSKRLYLSEISAAVTKATVLGSDWTDWLDWSY.

The first 18 residues, 1-18, serve as a signal peptide directing secretion; it reads MRVQSYLSLFSLVGAALC. N-linked (GlcNAc...) asparagine glycosylation is present at N126. Q143 contacts substrate. D166 (proton donor) is an active-site residue. Catalysis depends on D187, which acts as the Nucleophile. 2 residues coordinate substrate: R247 and W249.

This sequence belongs to the pectinesterase family.

It is found in the secreted. It carries out the reaction [(1-&gt;4)-alpha-D-galacturonosyl methyl ester](n) + n H2O = [(1-&gt;4)-alpha-D-galacturonosyl](n) + n methanol + n H(+). It functions in the pathway glycan metabolism; pectin degradation; 2-dehydro-3-deoxy-D-gluconate from pectin: step 1/5. In terms of biological role, involved in maceration and soft-rotting of plant tissue. Active against citrus pectin. The sequence is that of Pectinesterase A (pmeA) from Emericella nidulans (strain FGSC A4 / ATCC 38163 / CBS 112.46 / NRRL 194 / M139) (Aspergillus nidulans).